The chain runs to 149 residues: Large ribosomal subunit protein uL22c (149 aa).

The protein belongs to the universal ribosomal protein uL22 family. Part of the 50S ribosomal subunit.

The protein resides in the plastid. Its subcellular location is the chloroplast. This protein binds specifically to 23S rRNA. Functionally, the globular domain of the protein is located near the polypeptide exit tunnel on the outside of the subunit, while an extended beta-hairpin is found that lines the wall of the exit tunnel in the center of the 70S ribosome. In Pelargonium hortorum (Common geranium), this protein is Large ribosomal subunit protein uL22c (rpl22-A).